The following is a 161-amino-acid chain: Nucleotide-binding protein Swoo_3646 (161 aa).

It belongs to the YajQ family.

Nucleotide-binding protein. This chain is Nucleotide-binding protein Swoo_3646, found in Shewanella woodyi (strain ATCC 51908 / MS32).